Here is a 140-residue protein sequence, read N- to C-terminus: Large ribosomal subunit protein bL17 (140 aa).

It belongs to the bacterial ribosomal protein bL17 family. In terms of assembly, part of the 50S ribosomal subunit. Contacts protein L32.

This Methylobacterium nodulans (strain LMG 21967 / CNCM I-2342 / ORS 2060) protein is Large ribosomal subunit protein bL17.